Consider the following 206-residue polypeptide: Ubiquitin-conjugating enzyme E2 S (206 aa).

In terms of domain architecture, UBC core spans 14-160 (QTIRQVMKEL…ARMMTEIHAQ (147 aa)). The active-site Glycyl thioester intermediate is the Cys98. Residues 165–191 (GVSDAKDDDGPSNKKHAGLDKKLQDKK) are disordered. Positions 168–191 (DAKDDDGPSNKKHAGLDKKLQDKK) are enriched in basic and acidic residues.

Belongs to the ubiquitin-conjugating enzyme family.

It catalyses the reaction S-ubiquitinyl-[E1 ubiquitin-activating enzyme]-L-cysteine + [E2 ubiquitin-conjugating enzyme]-L-cysteine = [E1 ubiquitin-activating enzyme]-L-cysteine + S-ubiquitinyl-[E2 ubiquitin-conjugating enzyme]-L-cysteine.. Its pathway is protein modification; protein ubiquitination. Catalyzes the covalent attachment of ubiquitin to other proteins. Acts as an essential factor of the anaphase promoting complex/cyclosome (APC/C), a cell cycle-regulated ubiquitin ligase that controls progression through mitosis. Acts by specifically elongating polyubiquitin chains initiated by the E2 enzyme vih/UbcH10 on APC/C substrates, enhancing the degradation of APC/C substrates by the proteasome and promoting mitotic exit. This is Ubiquitin-conjugating enzyme E2 S from Drosophila mojavensis (Fruit fly).